Reading from the N-terminus, the 500-residue chain is L-arabinose isomerase (500 aa).

E306, E333, H349, and H448 together coordinate Mn(2+).

It belongs to the arabinose isomerase family. The cofactor is Mn(2+).

The catalysed reaction is beta-L-arabinopyranose = L-ribulose. The protein operates within carbohydrate degradation; L-arabinose degradation via L-ribulose; D-xylulose 5-phosphate from L-arabinose (bacterial route): step 1/3. In terms of biological role, catalyzes the conversion of L-arabinose to L-ribulose. This Shewanella sp. (strain MR-7) protein is L-arabinose isomerase.